We begin with the raw amino-acid sequence, 288 residues long: 4-hydroxy-tetrahydrodipicolinate synthase (288 aa).

Residue Thr43 coordinates pyruvate. The active-site Proton donor/acceptor is Tyr131. Lys160 functions as the Schiff-base intermediate with substrate in the catalytic mechanism. Ile200 serves as a coordination point for pyruvate.

The protein belongs to the DapA family. As to quaternary structure, homotetramer; dimer of dimers.

Its subcellular location is the cytoplasm. It carries out the reaction L-aspartate 4-semialdehyde + pyruvate = (2S,4S)-4-hydroxy-2,3,4,5-tetrahydrodipicolinate + H2O + H(+). It participates in amino-acid biosynthesis; L-lysine biosynthesis via DAP pathway; (S)-tetrahydrodipicolinate from L-aspartate: step 3/4. Functionally, catalyzes the condensation of (S)-aspartate-beta-semialdehyde [(S)-ASA] and pyruvate to 4-hydroxy-tetrahydrodipicolinate (HTPA). The polypeptide is 4-hydroxy-tetrahydrodipicolinate synthase (Methanococcus aeolicus (strain ATCC BAA-1280 / DSM 17508 / OCM 812 / Nankai-3)).